Consider the following 321-residue polypeptide: Transaldolase (321 aa).

The Schiff-base intermediate with substrate role is filled by K132.

It belongs to the transaldolase family. Type 1 subfamily. Homodimer.

The protein localises to the cytoplasm. It catalyses the reaction D-sedoheptulose 7-phosphate + D-glyceraldehyde 3-phosphate = D-erythrose 4-phosphate + beta-D-fructose 6-phosphate. It functions in the pathway carbohydrate degradation; pentose phosphate pathway; D-glyceraldehyde 3-phosphate and beta-D-fructose 6-phosphate from D-ribose 5-phosphate and D-xylulose 5-phosphate (non-oxidative stage): step 2/3. Its function is as follows. Transaldolase is important for the balance of metabolites in the pentose-phosphate pathway. The chain is Transaldolase from Rhizobium etli (strain ATCC 51251 / DSM 11541 / JCM 21823 / NBRC 15573 / CFN 42).